A 437-amino-acid chain; its full sequence is Chaperone SurA (437 aa).

A signal peptide spans M1–A27. 2 consecutive PpiC domains span residues Q179–N280 and V290–E388.

It localises to the periplasm. It carries out the reaction [protein]-peptidylproline (omega=180) = [protein]-peptidylproline (omega=0). In terms of biological role, chaperone involved in the correct folding and assembly of outer membrane proteins. Recognizes specific patterns of aromatic residues and the orientation of their side chains, which are found more frequently in integral outer membrane proteins. May act in both early periplasmic and late outer membrane-associated steps of protein maturation. This is Chaperone SurA from Methylobacillus flagellatus (strain ATCC 51484 / DSM 6875 / VKM B-1610 / KT).